The sequence spans 779 residues: Neutral ceramidase 1 (779 aa).

Catalysis depends on S350, which acts as the Nucleophile. N-linked (GlcNAc...) asparagine glycans are attached at residues N368, N432, and N667.

This sequence belongs to the neutral ceramidase family. Mostly expressed in stems, leaves, roots and siliques, and, to a lower extent, in flowers.

The protein resides in the secreted. The protein localises to the endoplasmic reticulum. Its subcellular location is the golgi apparatus. The catalysed reaction is an N-acylsphing-4-enine + H2O = sphing-4-enine + a fatty acid. In terms of biological role, hydrolyzes the sphingolipid ceramide into sphingosine and free fatty acid. Regulates sphingolipid homeostasis. Promotes oxidative stress resistance. The chain is Neutral ceramidase 1 from Arabidopsis thaliana (Mouse-ear cress).